The chain runs to 71 residues: Exodeoxyribonuclease 7 small subunit (71 aa).

This sequence belongs to the XseB family. Heterooligomer composed of large and small subunits.

It is found in the cytoplasm. It catalyses the reaction Exonucleolytic cleavage in either 5'- to 3'- or 3'- to 5'-direction to yield nucleoside 5'-phosphates.. In terms of biological role, bidirectionally degrades single-stranded DNA into large acid-insoluble oligonucleotides, which are then degraded further into small acid-soluble oligonucleotides. The protein is Exodeoxyribonuclease 7 small subunit of Streptococcus thermophilus (strain ATCC BAA-250 / LMG 18311).